The primary structure comprises 177 residues: Acireductone dioxygenase (177 aa).

Fe(2+) is bound by residues His-99, His-101, Glu-105, and His-143. Ni(2+) contacts are provided by His-99, His-101, Glu-105, and His-143.

The protein belongs to the acireductone dioxygenase (ARD) family. In terms of assembly, monomer. The cofactor is Fe(2+). Ni(2+) is required as a cofactor.

The enzyme catalyses 1,2-dihydroxy-5-(methylsulfanyl)pent-1-en-3-one + O2 = 3-(methylsulfanyl)propanoate + CO + formate + 2 H(+). The catalysed reaction is 1,2-dihydroxy-5-(methylsulfanyl)pent-1-en-3-one + O2 = 4-methylsulfanyl-2-oxobutanoate + formate + 2 H(+). It functions in the pathway amino-acid biosynthesis; L-methionine biosynthesis via salvage pathway; L-methionine from S-methyl-5-thio-alpha-D-ribose 1-phosphate: step 5/6. Functionally, catalyzes 2 different reactions between oxygen and the acireductone 1,2-dihydroxy-3-keto-5-methylthiopentene (DHK-MTPene) depending upon the metal bound in the active site. Fe-containing acireductone dioxygenase (Fe-ARD) produces formate and 2-keto-4-methylthiobutyrate (KMTB), the alpha-ketoacid precursor of methionine in the methionine recycle pathway. Ni-containing acireductone dioxygenase (Ni-ARD) produces methylthiopropionate, carbon monoxide and formate, and does not lie on the methionine recycle pathway. This chain is Acireductone dioxygenase, found in Leptospira interrogans serogroup Icterohaemorrhagiae serovar copenhageni (strain Fiocruz L1-130).